The sequence spans 230 residues: Large ribosomal subunit protein uL1 (230 aa).

This sequence belongs to the universal ribosomal protein uL1 family. As to quaternary structure, part of the 50S ribosomal subunit.

Binds directly to 23S rRNA. The L1 stalk is quite mobile in the ribosome, and is involved in E site tRNA release. Functionally, protein L1 is also a translational repressor protein, it controls the translation of the L11 operon by binding to its mRNA. The sequence is that of Large ribosomal subunit protein uL1 from Ruminiclostridium cellulolyticum (strain ATCC 35319 / DSM 5812 / JCM 6584 / H10) (Clostridium cellulolyticum).